A 119-amino-acid polypeptide reads, in one-letter code: MDYEFLRDVTGQVIVRMSMGHEAIGHWFNEEVKGQLTVLTDVEDGARSVAGSERQWRRVGHEYTLLLDEEEVMVQANQLSFTTDELEEGMSYYDEESLSLCGLDDFLTLVEKYREFILH.

Belongs to the UPF0231 family.

The polypeptide is UPF0231 protein ECA3777 (Pectobacterium atrosepticum (strain SCRI 1043 / ATCC BAA-672) (Erwinia carotovora subsp. atroseptica)).